The primary structure comprises 330 residues: B-cell receptor CD22 (330 aa).

A signal peptide spans Met-1–Ser-17. An Ig-like V-type domain is found at Asp-18–Glu-136. Residues Asp-18 to Glu-330 are Extracellular-facing. 3 disulfide bridges follow: Cys-37–Cys-165, Cys-42–Cys-100, and Cys-159–Cys-217. Residues Asn-65, Asn-99, and Asn-110 are each glycosylated (N-linked (GlcNAc...) asparagine). Position 118 (Arg-118) interacts with N-acetylneuraminate. Asn-133, Asn-162, Asn-187, and Asn-229 each carry an N-linked (GlcNAc...) asparagine glycan. Ig-like C2-type domains follow at residues Pro-141–Gln-233 and Pro-240–Gln-324. The cysteines at positions 263 and 307 are disulfide-linked.

This sequence belongs to the immunoglobulin superfamily. SIGLEC (sialic acid binding Ig-like lectin) family. Predominantly monomer of isoform CD22-beta. Also found as heterodimer of isoform CD22-beta and a shorter isoform. Interacts with PTPN6/SHP-1, LYN, SYK, PIK3R1/PIK3R2 and PLCG1 upon phosphorylation. Interacts with GRB2, INPP5D and SHC1 upon phosphorylation. May form a complex with INPP5D/SHIP, GRB2 and SHC1.

It is found in the cell membrane. Most highly expressed siglec (sialic acid-binding immunoglobulin-like lectin) on B-cells that plays a role in various aspects of B-cell biology including differentiation, antigen presentation, and trafficking to bone marrow. Binds to alpha 2,6-linked sialic acid residues of surface molecules such as CD22 itself, CD45 and IgM in a cis configuration. Can also bind to ligands on other cells as an adhesion molecule in a trans configuration. Acts as an inhibitory coreceptor on the surface of B-cells and inhibits B-cell receptor induced signaling, characterized by inhibition of the calcium mobilization and cellular activation. Mechanistically, the immunoreceptor tyrosine-based inhibitory motif domain is phosphorylated by the Src kinase LYN, which in turn leads to the recruitment of the protein tyrosine phosphatase 1/PTPN6, leading to the negative regulation of BCR signaling. If this negative signaling from is of sufficient strength, apoptosis of the B-cell can be induced. The polypeptide is B-cell receptor CD22 (Pongo pygmaeus (Bornean orangutan)).